The primary structure comprises 874 residues: Rho GTPase-activating protein 42 (874 aa).

Positions 7–262 constitute a BAR domain; it reads EFSDSYLDSP…MKSANQDYRP (256 aa). A coiled-coil region spans residues 225–261; it reads KQQLQFNLQNTRNNFESTRQEVERLMQRMKSANQDYR. Residues 265 to 374 form the PH domain; it reads QWTMEGYLYV…WLEAMDGKEP (110 aa). Phosphotyrosine is present on Tyr376. The region spanning 376-572 is the Rho-GAP domain; the sequence is YTLPAIISKK…ILIEHYEKIF (197 aa). The disordered stretch occupies residues 575–720; that stretch reads APDPSIPLPQ…GDVSPPIDLV (146 aa). Positions 620–650 are enriched in low complexity; the sequence is DSYSSSPDSTPMGSIESLSSHSSEQNSTTKS. Residues 667–686 are compositionally biased toward polar residues; that stretch reads TPSSSNGQKSLGLWTTSPES. Ser683 is modified (phosphoserine). A compositionally biased stretch (basic and acidic residues) spans 687-697; it reads SSREDATKTDA. The span at 700-711 shows a compositional bias: polar residues; it reads DCQSVASVTSPG. 4 positions are modified to phosphoserine: Ser740, Ser753, Ser756, and Ser811. The segment covering 749-762 has biased composition (polar residues); sequence SYSGSIQSLTSVGS. The tract at residues 749–777 is disordered; it reads SYSGSIQSLTSVGSKETPKASPNPDLPPK. The region spanning 816–874 is the SH3 domain; the sequence is SSGRQAKAMYSCKAEHSHELSFPQGAIFSNVYPSVEPGWLKATYEGKTGLVPENYVVFL. Tyr870 carries the phosphotyrosine modification.

Highly and selectively expressed in smooth muscle cells.

May influence blood pressure by functioning as a GTPase-activating protein for RHOA in vascular smooth muscle. This Homo sapiens (Human) protein is Rho GTPase-activating protein 42.